Consider the following 454-residue polypeptide: Methylenetetrahydrofolate--tRNA-(uracil-5-)-methyltransferase TrmFO (454 aa).

Residue 9–14 (GAGLAG) participates in FAD binding. The tract at residues 432-454 (LERVSPPSRETGEPTGAEQVDLA) is disordered.

It belongs to the MnmG family. TrmFO subfamily. Requires FAD as cofactor.

Its subcellular location is the cytoplasm. The catalysed reaction is uridine(54) in tRNA + (6R)-5,10-methylene-5,6,7,8-tetrahydrofolate + NADH + H(+) = 5-methyluridine(54) in tRNA + (6S)-5,6,7,8-tetrahydrofolate + NAD(+). The enzyme catalyses uridine(54) in tRNA + (6R)-5,10-methylene-5,6,7,8-tetrahydrofolate + NADPH + H(+) = 5-methyluridine(54) in tRNA + (6S)-5,6,7,8-tetrahydrofolate + NADP(+). Catalyzes the folate-dependent formation of 5-methyl-uridine at position 54 (M-5-U54) in all tRNAs. The polypeptide is Methylenetetrahydrofolate--tRNA-(uracil-5-)-methyltransferase TrmFO (Pelobacter propionicus (strain DSM 2379 / NBRC 103807 / OttBd1)).